A 558-amino-acid chain; its full sequence is Zinc finger protein piragua (558 aa).

Residues 15-94 enclose the ZAD domain; that stretch reads STCRLCHHNT…QEREQSLQEQ (80 aa). 4 residues coordinate Zn(2+): cysteine 17, cysteine 20, cysteine 67, and cysteine 70. Residues 132–177 are compositionally biased toward acidic residues; the sequence is LAESSEEEFALGSDGEYENYDDDDEEEEEDYDEEDEEDGQNGEDVD. Residues 132-178 are disordered; the sequence is LAESSEEEFALGSDGEYENYDDDDEEEEEDYDEEDEEDGQNGEDVDM. C2H2-type zinc fingers lie at residues 208 to 231, 237 to 260, 266 to 288, 294 to 316, 322 to 344, 350 to 372, 414 to 436, 441 to 464, and 468 to 490; these read FLCQ…LAAH, YCCN…KTLH, YVCA…TIVH, FTCN…MRIH, FVCQ…TRSH, FQCG…QQVH, YHCD…QALH, FACK…LEAH, and FTCG…LKVH.

May be involved in transcriptional regulation. The function of this protein is unclear. According to one report, it is required for development and viability since mutants display defects in several developmental morphogenetic processes including dorsal closure and head involution, and die by the first instar larval stage. It may also be involved in fwe-mediated cellular competition. However, according to another report, it is not required for development or viability since mutants have no visible phenotype and are fertile. The protein is Zinc finger protein piragua of Drosophila melanogaster (Fruit fly).